A 172-amino-acid chain; its full sequence is Mesogenin-1 (172 aa).

The disordered stretch occupies residues 1–69 (METLHHPLVK…SPYSSSSHTQ (69 aa)). The segment covering 18 to 29 (SSDSEPNSSCMA) has biased composition (polar residues). Over residues 42 to 66 (SLSQTPSPQSLSPAVSYESPYSSSS) the composition is skewed to low complexity. Residues 108–162 (QRRRKASEREKLRMRAIAEALHTLRNNLPPMYSQGRQPLTKIQTLKCTINYISEL) form the bHLH domain.

The protein resides in the nucleus. In terms of biological role, involved in specifying the paraxial, but not dorsal, mesoderm. May regulate the expression of T-box transcription factors required for mesoderm formation and differentiation, such as brachyury T, wnt8, vegt and eomes. This Xenopus tropicalis (Western clawed frog) protein is Mesogenin-1 (msgn1).